The following is a 244-amino-acid chain: Phosphatidylserine decarboxylase proenzyme (244 aa).

Residue serine 212 is the Schiff-base intermediate with substrate; via pyruvic acid of the active site. At serine 212 the chain carries Pyruvic acid (Ser); by autocatalysis.

Belongs to the phosphatidylserine decarboxylase family. PSD-A subfamily. In terms of assembly, heterodimer of a large membrane-associated beta subunit and a small pyruvoyl-containing alpha subunit. Pyruvate serves as cofactor. In terms of processing, is synthesized initially as an inactive proenzyme. Formation of the active enzyme involves a self-maturation process in which the active site pyruvoyl group is generated from an internal serine residue via an autocatalytic post-translational modification. Two non-identical subunits are generated from the proenzyme in this reaction, and the pyruvate is formed at the N-terminus of the alpha chain, which is derived from the carboxyl end of the proenzyme. The post-translation cleavage follows an unusual pathway, termed non-hydrolytic serinolysis, in which the side chain hydroxyl group of the serine supplies its oxygen atom to form the C-terminus of the beta chain, while the remainder of the serine residue undergoes an oxidative deamination to produce ammonia and the pyruvoyl prosthetic group on the alpha chain.

It localises to the cell membrane. The catalysed reaction is a 1,2-diacyl-sn-glycero-3-phospho-L-serine + H(+) = a 1,2-diacyl-sn-glycero-3-phosphoethanolamine + CO2. It functions in the pathway phospholipid metabolism; phosphatidylethanolamine biosynthesis; phosphatidylethanolamine from CDP-diacylglycerol: step 2/2. Its function is as follows. Catalyzes the formation of phosphatidylethanolamine (PtdEtn) from phosphatidylserine (PtdSer). This chain is Phosphatidylserine decarboxylase proenzyme, found in Granulibacter bethesdensis (strain ATCC BAA-1260 / CGDNIH1).